Here is an 86-residue protein sequence, read N- to C-terminus: RNA-binding protein Hfq (86 aa).

One can recognise a Sm domain in the interval aspartate 9–valine 68. Residues arginine 66–alanine 86 are disordered. The segment covering aspartate 75–alanine 86 has biased composition (basic and acidic residues).

The protein belongs to the Hfq family. As to quaternary structure, homohexamer.

RNA chaperone that binds small regulatory RNA (sRNAs) and mRNAs to facilitate mRNA translational regulation in response to envelope stress, environmental stress and changes in metabolite concentrations. Also binds with high specificity to tRNAs. The protein is RNA-binding protein Hfq of Pseudomonas putida (strain W619).